The chain runs to 258 residues: Acyl-[acyl-carrier-protein]--UDP-N-acetylglucosamine O-acyltransferase (258 aa).

It belongs to the transferase hexapeptide repeat family. LpxA subfamily. As to quaternary structure, homotrimer.

The protein localises to the cytoplasm. The catalysed reaction is a (3R)-hydroxyacyl-[ACP] + UDP-N-acetyl-alpha-D-glucosamine = a UDP-3-O-[(3R)-3-hydroxyacyl]-N-acetyl-alpha-D-glucosamine + holo-[ACP]. The protein operates within glycolipid biosynthesis; lipid IV(A) biosynthesis; lipid IV(A) from (3R)-3-hydroxytetradecanoyl-[acyl-carrier-protein] and UDP-N-acetyl-alpha-D-glucosamine: step 1/6. Its function is as follows. Involved in the biosynthesis of lipid A, a phosphorylated glycolipid that anchors the lipopolysaccharide to the outer membrane of the cell. The chain is Acyl-[acyl-carrier-protein]--UDP-N-acetylglucosamine O-acyltransferase from Pseudomonas syringae pv. tomato (strain ATCC BAA-871 / DC3000).